The chain runs to 253 residues: Indole-3-glycerol phosphate synthase (253 aa).

The protein belongs to the TrpC family.

It catalyses the reaction 1-(2-carboxyphenylamino)-1-deoxy-D-ribulose 5-phosphate + H(+) = (1S,2R)-1-C-(indol-3-yl)glycerol 3-phosphate + CO2 + H2O. It functions in the pathway amino-acid biosynthesis; L-tryptophan biosynthesis; L-tryptophan from chorismate: step 4/5. The polypeptide is Indole-3-glycerol phosphate synthase (Exiguobacterium sp. (strain ATCC BAA-1283 / AT1b)).